The chain runs to 354 residues: DNA polymerase IV (354 aa).

The region spanning 8 to 189 (IIHVDMDCFY…LPLEKIPGVG (182 aa)) is the UmuC domain. The Mg(2+) site is built by Asp12 and Asp107. Glu108 is a catalytic residue.

Belongs to the DNA polymerase type-Y family. As to quaternary structure, monomer. The cofactor is Mg(2+).

Its subcellular location is the cytoplasm. It catalyses the reaction DNA(n) + a 2'-deoxyribonucleoside 5'-triphosphate = DNA(n+1) + diphosphate. Functionally, poorly processive, error-prone DNA polymerase involved in untargeted mutagenesis. Copies undamaged DNA at stalled replication forks, which arise in vivo from mismatched or misaligned primer ends. These misaligned primers can be extended by PolIV. Exhibits no 3'-5' exonuclease (proofreading) activity. May be involved in translesional synthesis, in conjunction with the beta clamp from PolIII. The sequence is that of DNA polymerase IV from Vibrio parahaemolyticus serotype O3:K6 (strain RIMD 2210633).